Consider the following 319-residue polypeptide: Taste receptor type 2 member 30 (319 aa).

Residue Met-1 is a topological domain, extracellular. The helical transmembrane segment at 2 to 22 (ITFLPIIFSILIVVIFVIGNF) threads the bilayer. At 23-46 (ANGFIALVNSIEWVKRQKISFADQ) the chain is on the cytoplasmic side. The helical transmembrane segment at 47-67 (ILIALAVSRVGLLWALLLHWY) threads the bilayer. At 68–86 (ATELNLAFYSVEVRITAYN) the chain is on the extracellular side. Residues 87 to 107 (VWAVTNHFSNWLATSLSMFYL) traverse the membrane as a helical segment. The Cytoplasmic segment spans residues 108–126 (LKIANFSNLIFLRIKRRVK). A helical transmembrane segment spans residues 127–147 (SVILVILLGPLLFLVCHLFVI). At 148–178 (NMNEIVWTKEYEGNLTWKIKLRNAVFLSNMT) the chain is on the extracellular side. Residues Asn-161 and Asn-176 are each glycosylated (N-linked (GlcNAc...) asparagine). A helical transmembrane segment spans residues 179-199 (LTMLANFVPLTLTLISFLLLI). The Cytoplasmic segment spans residues 200-229 (CSLCKHLKKMQLHGKGSQDPSTKVHIKALQ). The helical transmembrane segment at 230–250 (TVTCFLLLCAIYFLSMIISVY) threads the bilayer. Residues 251–259 (NFGRLEKKP) are Extracellular-facing. Residues 260 to 280 (VFMFCQAITFSYPSTHAFILI) form a helical membrane-spanning segment. The Cytoplasmic segment spans residues 281 to 319 (WGNKKLKQIFLSVLWHVRYWVKDRSLRLHRFTRAALCKG).

The protein belongs to the G-protein coupled receptor T2R family.

It is found in the membrane. Functionally, receptor that may play a role in the perception of bitterness and is gustducin-linked. May play a role in sensing the chemical composition of the gastrointestinal content. The activity of this receptor may stimulate alpha gustducin, mediate PLC-beta-2 activation and lead to the gating of TRPM5. This is Taste receptor type 2 member 30 (TAS2R30) from Pongo pygmaeus (Bornean orangutan).